The sequence spans 138 residues: Drosulfakinins (138 aa).

Residues 1–33 form the signal peptide; that stretch reads MGLRSCTHFATLVMPLWALAFCFLVLVPVPAQT. Positions 34-73 are excised as a propeptide; the sequence is TSLQISKGDRRLQDLESNMGAESDQPNANLVGTSLSRFGD. Phe-82 carries the phenylalanine amide modification. A propeptide spanning residues 86-108 is cleaved from the precursor; it reads VPRPIIPIELDLLMDNDDENTKA. At Tyr-114 the chain carries Sulfotyrosine. Phe-119 is subject to Phenylalanine amide. Tyr-131 carries the sulfotyrosine modification. Phe-136 is modified (phenylalanine amide).

It belongs to the gastrin/cholecystokinin family.

It localises to the secreted. Its function is as follows. Drosulfakinin-0 (DSK 0) plays diverse biological roles including regulating gut muscle contraction in adults but not in larvae. The protein is Drosulfakinins of Drosophila teissieri (Fruit fly).